Here is a 139-residue protein sequence, read N- to C-terminus: D-ribose pyranase (139 aa).

The active-site Proton donor is the histidine 20. Residues aspartate 28, histidine 106, and 128–130 (YAN) contribute to the substrate site.

Belongs to the RbsD / FucU family. RbsD subfamily. Homodecamer.

Its subcellular location is the cytoplasm. It carries out the reaction beta-D-ribopyranose = beta-D-ribofuranose. It participates in carbohydrate metabolism; D-ribose degradation; D-ribose 5-phosphate from beta-D-ribopyranose: step 1/2. Its function is as follows. Catalyzes the interconversion of beta-pyran and beta-furan forms of D-ribose. The sequence is that of D-ribose pyranase from Serratia proteamaculans (strain 568).